The sequence spans 413 residues: MPSSISWGLLLLAALSCLGPGSLAQDAQETEASKQDQEHPASHRIAPHLAEFALSFYRVLARQSNTTNIFFSPVSIATALAMLSLGTKGDTHTQILEGLDFNLTEMAEADIHQGFQNLLQTLNRPNTQLQLTSGNGLFIDRNLKLLDKFLEDVKSLYHSEAFSTNFTNTQEARQQINSYVEKGTQGKIVELLKELDRDTVLALVNYIFFKGKWKQPFNEEQTREKDFHVDEATTVRVPMMNRLGMFHLHHCSTLASWVLQMDYLGNATAIFLLPDKGKMQHLEDTVTTEILTKFLKNRQTTKSQLYFPKVSISGTYDLKDVLSSLGITKVFSSEADLSGVTEEAPLSVSKALHKAVLDIDEEGTEAAGGTVLGNIRSTLRYEVIFDRPFLVVIYEHHTKSPLFVGKVVNPTQQ.

The N-terminal stretch at 1 to 24 is a signal peptide; sequence MPSSISWGLLLLAALSCLGPGSLA. Position 25 is a pyrrolidone carboxylic acid (Gln25). 4 N-linked (GlcNAc...) asparagine glycosylation sites follow: Asn65, Asn102, Asn165, and Asn266. The tract at residues 368-387 is RCL; it reads GGTVLGNIRSTLRYEVIFDR.

It belongs to the serpin family. As to expression, expressed in liver.

This is Alpha-1-antitrypsin-like protein CM55-ST from Tamias sibiricus (Siberian chipmunk).